The primary structure comprises 100 residues: uncharacterized protein (100 aa).

A helical transmembrane segment spans residues 28–45 (VFLVFYIITMVKIYIFLI).

It localises to the membrane. This is an uncharacterized protein from Saccharomyces cerevisiae (strain ATCC 204508 / S288c) (Baker's yeast).